A 753-amino-acid chain; its full sequence is Centromere protein I (753 aa).

Over residues 1 to 15 (MQRRQSSKHSKRPLQ) the composition is skewed to basic residues. Residues 1–54 (MQRRQSSKHSKRPLQVHHSNQTDLSAWRKGGTVDTEKSAQNRQSLSDQKNDNEQ) are disordered.

The protein belongs to the CENP-I/CTF3 family. Component of the CENPA-HI complex, at least composed of CENPH, CENPI, CENPK, CENPL, CENPM, CENPO and CENPP.

It is found in the nucleus. Its subcellular location is the chromosome. The protein localises to the centromere. Functionally, component of the CENPA-HI complex, a centromeric complex involved in assembly of kinetochore proteins, mitotic progression and chromosome segregation. Required for the localization of CENPC but not CENPA to the centromere. It however may be involved in incorporation of newly synthesized CENPA into centromeres via its interaction with the CENPA-NAC complex. This chain is Centromere protein I (CENPI), found in Gallus gallus (Chicken).